The following is a 252-amino-acid chain: Imidazole glycerol phosphate synthase subunit HisF (252 aa).

Residues D11 and D130 contribute to the active site.

This sequence belongs to the HisA/HisF family. As to quaternary structure, heterodimer of HisH and HisF.

It localises to the cytoplasm. It carries out the reaction 5-[(5-phospho-1-deoxy-D-ribulos-1-ylimino)methylamino]-1-(5-phospho-beta-D-ribosyl)imidazole-4-carboxamide + L-glutamine = D-erythro-1-(imidazol-4-yl)glycerol 3-phosphate + 5-amino-1-(5-phospho-beta-D-ribosyl)imidazole-4-carboxamide + L-glutamate + H(+). It participates in amino-acid biosynthesis; L-histidine biosynthesis; L-histidine from 5-phospho-alpha-D-ribose 1-diphosphate: step 5/9. IGPS catalyzes the conversion of PRFAR and glutamine to IGP, AICAR and glutamate. The HisF subunit catalyzes the cyclization activity that produces IGP and AICAR from PRFAR using the ammonia provided by the HisH subunit. The chain is Imidazole glycerol phosphate synthase subunit HisF from Geobacillus thermodenitrificans (strain NG80-2).